Reading from the N-terminus, the 361-residue chain is PTI1-like tyrosine-protein kinase At3g15890 (361 aa).

The Protein kinase domain maps to 39–328 (FNYDNKLGEG…ISELEANPLF (290 aa)). ATP is bound by residues 45–53 (LGEGRFGSV) and K67. The Proton acceptor role is filled by D165. Disordered regions lie at residues 195–219 (TGDGATKAKSNNGYISPECDASGKE) and 323–361 (EANPLFKNPYSSNENNREHVAEESSDVILEDKDHQQQQE). Residues 351-361 (LEDKDHQQQQE) are compositionally biased toward basic and acidic residues.

It belongs to the protein kinase superfamily. Tyr protein kinase family.

It carries out the reaction L-tyrosyl-[protein] + ATP = O-phospho-L-tyrosyl-[protein] + ADP + H(+). The protein is PTI1-like tyrosine-protein kinase At3g15890 of Arabidopsis thaliana (Mouse-ear cress).